The sequence spans 356 residues: MKRELLLEKIDELKEIMPWYVLEYYQSKLSVPYSFTTLYEYLKEYRRFLEWLLDSGVANCHHIAEIELSVLENLTKKDMEAFILYLRERPLLNANTRQNGVSQTTINRTLSALSSLFKYLTEEVENADGEPYFYRNVMKKVSTKKKKETLASRAENIKQKLFLGNETIEFLEYIDCEYQNKLSKRALAFFNKNKERDLAIIALLLASGVRLSEAVNLDLKDINLNVMVIDVTRKGGKRDSVNVASFAKPYLANYLDIRKNRYKAENQDIALFLSEYRGVPNRIDASSVEKMVAKYSQDFKVRVTPHKLRHTLATRLYDATKSQVLVSHQLGHASTQVTDLYTHIVNDEQKNALDKL.

The Core-binding (CB) domain occupies 16–121; it reads IMPWYVLEYY…ALSSLFKYLT (106 aa). Residues 169–354 form the Tyr recombinase domain; sequence EFLEYIDCEY…VNDEQKNALD (186 aa). Catalysis depends on residues Arg-210, Lys-234, His-306, Arg-309, and His-332. The active-site O-(3'-phospho-DNA)-tyrosine intermediate is Tyr-341.

This sequence belongs to the 'phage' integrase family. XerS subfamily.

Its subcellular location is the cytoplasm. With respect to regulation, ftsK is required for recombination. Its function is as follows. Site-specific tyrosine recombinase, which acts by catalyzing the cutting and rejoining of the recombining DNA molecules. Essential to convert dimers of the bacterial chromosome into monomers to permit their segregation at cell division. This chain is Tyrosine recombinase XerS, found in Streptococcus agalactiae serotype Ia (strain ATCC 27591 / A909 / CDC SS700).